Here is a 660-residue protein sequence, read N- to C-terminus: DNA mismatch repair protein MutL (660 aa).

Disordered stretches follow at residues 368-426 (PQQT…PTKK) and 439-461 (NREQ…STQQ). The span at 406–417 (SSSSNSTAPSRS) shows a compositional bias: low complexity.

The protein belongs to the DNA mismatch repair MutL/HexB family.

In terms of biological role, this protein is involved in the repair of mismatches in DNA. It is required for dam-dependent methyl-directed DNA mismatch repair. May act as a 'molecular matchmaker', a protein that promotes the formation of a stable complex between two or more DNA-binding proteins in an ATP-dependent manner without itself being part of a final effector complex. The polypeptide is DNA mismatch repair protein MutL (Aliivibrio fischeri (strain ATCC 700601 / ES114) (Vibrio fischeri)).